A 469-amino-acid polypeptide reads, in one-letter code: Coumaroyl-CoA:anthocyanidin 3-O-glucoside-6''-O-coumaroyltransferase 1 (469 aa).

At Met1 the chain carries N-acetylmethionine. Catalysis depends on proton acceptor residues His173 and Asp410.

Belongs to the plant acyltransferase family. As to expression, highly expressed in flowers, leaves and roots. Lower levels of expression in stems and siliques.

Functionally, involved in the acylation of the 6'' position of the 3-O-glucose residue of anthocyanin. Also able to use flavonol 3-glucosides as the acyl acceptor. The polypeptide is Coumaroyl-CoA:anthocyanidin 3-O-glucoside-6''-O-coumaroyltransferase 1 (3AT1) (Arabidopsis thaliana (Mouse-ear cress)).